Reading from the N-terminus, the 318-residue chain is (1S)-1,7-diacetoxy-luvungin A aldo-keto reductase (318 aa).

The active-site Proton donor is Tyr-54.

This sequence belongs to the aldo/keto reductase family. In terms of tissue distribution, expressed in flowers, maturing fruits and in juice vesicles.

It catalyses the reaction (1S)-1,7-diacetoxy-luvungin A + AH2 + H2O = (1R,2R,3S,8R,10R,11R,15S,16S)-3-(acetyloxy)-15-[(4R)-4-[(2S)-3,3-dimethyloxiran-2-yl]-1,4-dihydroxybutan-2-yl]-2,7,7,11,16-pentamethyl-5-oxo-6-oxatetracyclo[9.7.0.0(2,8).0(12,16)]octadec-12-en-10-yl acetate + acetate + A + H(+). The protein operates within secondary metabolite biosynthesis; terpenoid biosynthesis. In terms of biological role, aldo-keto reductase involved in the biosynthesis of limonoids triterpene natural products such as limonin, a compound with insecticidal activity responsible for the bitter taste in citrus. Can use (1S)-1,7-diacetoxy-luvungin A as substrate. The sequence is that of (1S)-1,7-diacetoxy-luvungin A aldo-keto reductase from Citrus sinensis (Sweet orange).